The primary structure comprises 245 residues: NAD-dependent protein deacetylase (245 aa).

In terms of domain architecture, Deacetylase sirtuin-type spans Met1–Lys245. NAD(+)-binding residues include Ala26, Thr30, Phe37, Arg38, Gln105, Ile107, Asp108, and His123. A nicotinamide-binding site is contributed by Phe37. Residues Ile107 and Asp108 each coordinate nicotinamide. His123 serves as the catalytic Proton acceptor. Residues Cys131, Cys134, Cys151, and Cys154 each contribute to the Zn(2+) site. NAD(+) contacts are provided by Thr190, Ser191, Asn216, and Ile234.

Belongs to the sirtuin family. Class U subfamily. The cofactor is Zn(2+).

It localises to the cytoplasm. It carries out the reaction N(6)-acetyl-L-lysyl-[protein] + NAD(+) + H2O = 2''-O-acetyl-ADP-D-ribose + nicotinamide + L-lysyl-[protein]. Its function is as follows. NAD-dependent protein deacetylase which modulates the activities of several enzymes which are inactive in their acetylated form. This is NAD-dependent protein deacetylase from Bacillus cereus (strain ATCC 14579 / DSM 31 / CCUG 7414 / JCM 2152 / NBRC 15305 / NCIMB 9373 / NCTC 2599 / NRRL B-3711).